Reading from the N-terminus, the 422-residue chain is Serine--tRNA ligase (422 aa).

The disordered stretch occupies residues 1-20 (MHDLKSIRDNPDGFDAGLKR). 229–231 (TAE) contacts L-serine. An ATP-binding site is contributed by 260–262 (RSE). Glu283 provides a ligand contact to L-serine. Residue 347 to 350 (EISS) participates in ATP binding. Ser383 lines the L-serine pocket.

The protein belongs to the class-II aminoacyl-tRNA synthetase family. Type-1 seryl-tRNA synthetase subfamily. As to quaternary structure, homodimer. The tRNA molecule binds across the dimer.

It is found in the cytoplasm. It catalyses the reaction tRNA(Ser) + L-serine + ATP = L-seryl-tRNA(Ser) + AMP + diphosphate + H(+). The enzyme catalyses tRNA(Sec) + L-serine + ATP = L-seryl-tRNA(Sec) + AMP + diphosphate + H(+). It functions in the pathway aminoacyl-tRNA biosynthesis; selenocysteinyl-tRNA(Sec) biosynthesis; L-seryl-tRNA(Sec) from L-serine and tRNA(Sec): step 1/1. Its function is as follows. Catalyzes the attachment of serine to tRNA(Ser). Is also able to aminoacylate tRNA(Sec) with serine, to form the misacylated tRNA L-seryl-tRNA(Sec), which will be further converted into selenocysteinyl-tRNA(Sec). The protein is Serine--tRNA ligase of Paramagnetospirillum magneticum (strain ATCC 700264 / AMB-1) (Magnetospirillum magneticum).